The chain runs to 104 residues: Secretoglobin family 3A member 1 (104 aa).

The N-terminal stretch at 1 to 20 (MKLAALLGLCVALSCSSAAA) is a signal peptide.

This sequence belongs to the secretoglobin family. UGRP subfamily. Homodimer; disulfide-linked. As to expression, highly expressed in lung and prostate. Also found in mammary gland, spleen, pancreas, testis and liver. Detected throughout the airway epithelium in lung, with highest expression in large airways. Found in lung submucosal glands where it localizes to acinar and ductile cells. Not detected in respiratory bronchioles, alveolar ducts or alveolar epithelium. In mammary gland, specifically localizes to luminal epithelial cells.

It localises to the secreted. In terms of biological role, secreted cytokine-like protein. Inhibits cell growth in vitro. The polypeptide is Secretoglobin family 3A member 1 (SCGB3A1) (Homo sapiens (Human)).